We begin with the raw amino-acid sequence, 179 residues long: Large ribosomal subunit protein uL5 (179 aa).

Belongs to the universal ribosomal protein uL5 family. In terms of assembly, part of the 50S ribosomal subunit; part of the 5S rRNA/L5/L18/L25 subcomplex. Contacts the 5S rRNA and the P site tRNA. Forms a bridge to the 30S subunit in the 70S ribosome.

Functionally, this is one of the proteins that bind and probably mediate the attachment of the 5S RNA into the large ribosomal subunit, where it forms part of the central protuberance. In the 70S ribosome it contacts protein S13 of the 30S subunit (bridge B1b), connecting the 2 subunits; this bridge is implicated in subunit movement. Contacts the P site tRNA; the 5S rRNA and some of its associated proteins might help stabilize positioning of ribosome-bound tRNAs. The protein is Large ribosomal subunit protein uL5 of Burkholderia vietnamiensis (strain G4 / LMG 22486) (Burkholderia cepacia (strain R1808)).